A 506-amino-acid polypeptide reads, in one-letter code: Lysine--tRNA ligase (506 aa).

Positions 416 and 423 each coordinate Mg(2+).

It belongs to the class-II aminoacyl-tRNA synthetase family. As to quaternary structure, homodimer. It depends on Mg(2+) as a cofactor.

Its subcellular location is the cytoplasm. The enzyme catalyses tRNA(Lys) + L-lysine + ATP = L-lysyl-tRNA(Lys) + AMP + diphosphate. This is Lysine--tRNA ligase from Xylella fastidiosa (strain M12).